The chain runs to 426 residues: Glucose-6-phosphate isomerase (426 aa).

Glutamate 282 acts as the Proton donor in catalysis. Active-site residues include histidine 303 and lysine 417.

This sequence belongs to the GPI family.

The protein localises to the cytoplasm. It catalyses the reaction alpha-D-glucose 6-phosphate = beta-D-fructose 6-phosphate. Its pathway is carbohydrate biosynthesis; gluconeogenesis. The protein operates within carbohydrate degradation; glycolysis; D-glyceraldehyde 3-phosphate and glycerone phosphate from D-glucose: step 2/4. Its function is as follows. Catalyzes the reversible isomerization of glucose-6-phosphate to fructose-6-phosphate. The polypeptide is Glucose-6-phosphate isomerase (Aster yellows witches'-broom phytoplasma (strain AYWB)).